Consider the following 206-residue polypeptide: Endoribonuclease YbeY (206 aa).

The tract at residues 1-20 (MSQANHNDTHNNIDDNINNH) is disordered. Residues H168, H172, and H178 each contribute to the Zn(2+) site.

It belongs to the endoribonuclease YbeY family. It depends on Zn(2+) as a cofactor.

Its subcellular location is the cytoplasm. Functionally, single strand-specific metallo-endoribonuclease involved in late-stage 70S ribosome quality control and in maturation of the 3' terminus of the 16S rRNA. In Psychrobacter arcticus (strain DSM 17307 / VKM B-2377 / 273-4), this protein is Endoribonuclease YbeY.